Consider the following 229-residue polypeptide: NAD(P)H-hydrate epimerase (229 aa).

Positions 10–224 constitute a YjeF N-terminal domain; that stretch reads SREVDQIAIE…DIGIPPALLD (215 aa). (6S)-NADPHX is bound at residue 57–61; that stretch reads NNGGD. K(+)-binding residues include Asn58 and Asp129. (6S)-NADPHX is bound by residues 133-139 and Asp167; that span reads GTGIRGQ. A K(+)-binding site is contributed by Ser170.

It belongs to the NnrE/AIBP family. Requires K(+) as cofactor.

It carries out the reaction (6R)-NADHX = (6S)-NADHX. The enzyme catalyses (6R)-NADPHX = (6S)-NADPHX. In terms of biological role, catalyzes the epimerization of the S- and R-forms of NAD(P)HX, a damaged form of NAD(P)H that is a result of enzymatic or heat-dependent hydration. This is a prerequisite for the S-specific NAD(P)H-hydrate dehydratase to allow the repair of both epimers of NAD(P)HX. In Rubinisphaera brasiliensis (strain ATCC 49424 / DSM 5305 / JCM 21570 / IAM 15109 / NBRC 103401 / IFAM 1448) (Planctomyces brasiliensis), this protein is NAD(P)H-hydrate epimerase.